An 816-amino-acid chain; its full sequence is Phosphatidylinositol 4-kinase beta (816 aa).

The disordered stretch occupies residues 1-30; the sequence is MGDTVVEPTPLKPTSESTPGPAGSNGGSLL. An N-acetylglycine modification is found at Gly2. An interaction with ACBD3 region spans residues 2 to 68; sequence GDTVVEPTPL…VKLLHGGVAI (67 aa). The 191-residue stretch at 52-242 folds into the PIK helical domain; it reads CQEVLEKVKL…GTKLRKLILS (191 aa). The tract at residues 248–318 is disordered; sequence AHRKRELPSL…TESIDNSFSS (71 aa). Ser258 is modified (phosphoserine). Phosphothreonine is present on Thr263. Phosphoserine occurs at positions 266, 275, 277, 284, and 294. 2 stretches are compositionally biased toward polar residues: residues 278–297 and 306–318; these read DATA…SNPK and SSST…SFSS. Residue Ser428 is modified to Phosphoserine. Residue Thr438 is modified to Phosphothreonine. Ser511 is modified (phosphoserine). Phosphothreonine occurs at positions 517 and 519. The PI3K/PI4K catalytic domain occupies 535-801; that stretch reads EPWQEKVRRI…MVDGSMRSIT (267 aa). The segment at 541–547 is G-loop; sequence VRRIREG. The interval 668–676 is catalytic loop; it reads QVKDRHNGN. Positions 687–711 are activation loop; it reads HIDFGFILSSSPRNLGFETSAFKLT.

It belongs to the PI3/PI4-kinase family. Type III PI4K subfamily. As to quaternary structure, interacts with ARF1 and ARF3 in the Golgi complex, but not with ARF4, ARF5 or ARF6. Interacts with NCS1/FREQ in a calcium-independent manner. Interacts with CALN1/CABP8 and CALN2/CABP7; in a calcium-dependent manner; this interaction competes with NCS1/FREQ binding. Interacts with ACBD3. Interacts with ARMH3, YWHAB, YWHAE, YWHAG, YWHAH, YWHAQ, YWHAZ and SFN. Interacts with GGA2 (via VHS domain); the interaction is important for PI4KB location at the Golgi apparatus membrane. Interacts with ATG9A. The cofactor is Mg(2+). It depends on Mn(2+) as a cofactor.

Its subcellular location is the endomembrane system. The protein localises to the mitochondrion outer membrane. The protein resides in the rough endoplasmic reticulum membrane. It localises to the golgi apparatus. It is found in the golgi apparatus membrane. The enzyme catalyses a 1,2-diacyl-sn-glycero-3-phospho-(1D-myo-inositol) + ATP = a 1,2-diacyl-sn-glycero-3-phospho-(1D-myo-inositol 4-phosphate) + ADP + H(+). With respect to regulation, inhibited by wortmannin. Increased kinase activity upon interaction with NCS1/FREQ. Its function is as follows. Phosphorylates phosphatidylinositol (PI) in the first committed step in the production of the second messenger inositol-1,4,5,-trisphosphate (PIP). May regulate Golgi disintegration/reorganization during mitosis, possibly via its phosphorylation. Involved in Golgi-to-plasma membrane trafficking. May play an important role in the inner ear development. The sequence is that of Phosphatidylinositol 4-kinase beta (PI4KB) from Otolemur garnettii (Small-eared galago).